The chain runs to 169 residues: Peptide methionine sulfoxide reductase MsrA (169 aa).

The active site involves cysteine 10.

Belongs to the MsrA Met sulfoxide reductase family.

The enzyme catalyses L-methionyl-[protein] + [thioredoxin]-disulfide + H2O = L-methionyl-(S)-S-oxide-[protein] + [thioredoxin]-dithiol. The catalysed reaction is [thioredoxin]-disulfide + L-methionine + H2O = L-methionine (S)-S-oxide + [thioredoxin]-dithiol. Functionally, has an important function as a repair enzyme for proteins that have been inactivated by oxidation. Catalyzes the reversible oxidation-reduction of methionine sulfoxide in proteins to methionine. This chain is Peptide methionine sulfoxide reductase MsrA, found in Streptococcus mutans serotype c (strain ATCC 700610 / UA159).